Reading from the N-terminus, the 81-residue chain is Putative defensin-like protein 52 (81 aa).

A signal peptide spans 1–20 (MTFFLVIILAISSSNYNVLA). Cystine bridges form between C31/C55 and C41/C64.

This sequence belongs to the DEFL family.

The protein resides in the secreted. In Arabidopsis thaliana (Mouse-ear cress), this protein is Putative defensin-like protein 52.